We begin with the raw amino-acid sequence, 180 residues long: UPF0227 protein YcfP (180 aa).

It belongs to the UPF0227 family.

In Escherichia coli O139:H28 (strain E24377A / ETEC), this protein is UPF0227 protein YcfP.